Here is an 86-residue protein sequence, read N- to C-terminus: Small ribosomal subunit protein uS15 (86 aa).

Residues 1 to 10 show a composition bias toward polar residues; the sequence is MSIDTQSIIE. The disordered stretch occupies residues 1 to 21; sequence MSIDTQSIIENNKRSAHDTGS.

It belongs to the universal ribosomal protein uS15 family. As to quaternary structure, part of the 30S ribosomal subunit. Forms a bridge to the 50S subunit in the 70S ribosome, contacting the 23S rRNA.

In terms of biological role, one of the primary rRNA binding proteins, it binds directly to 16S rRNA where it helps nucleate assembly of the platform of the 30S subunit by binding and bridging several RNA helices of the 16S rRNA. Functionally, forms an intersubunit bridge (bridge B4) with the 23S rRNA of the 50S subunit in the ribosome. This is Small ribosomal subunit protein uS15 from Xylella fastidiosa (strain M23).